Here is a 281-residue protein sequence, read N- to C-terminus: Polyamine aminopropyltransferase (281 aa).

A PABS domain is found at 2 to 236 (DLWLKEGQIS…GYWSFTIGSK (235 aa)). Q31 contacts S-methyl-5'-thioadenosine. H62 and D86 together coordinate spermidine. Residues E106 and 138 to 139 (DG) contribute to the S-methyl-5'-thioadenosine site. The active-site Proton acceptor is D156. A spermidine-binding site is contributed by 156–159 (DSTD).

It belongs to the spermidine/spermine synthase family. Homodimer or homotetramer.

The protein localises to the cytoplasm. The catalysed reaction is S-adenosyl 3-(methylsulfanyl)propylamine + putrescine = S-methyl-5'-thioadenosine + spermidine + H(+). It functions in the pathway amine and polyamine biosynthesis; spermidine biosynthesis; spermidine from putrescine: step 1/1. Its function is as follows. Catalyzes the irreversible transfer of a propylamine group from the amino donor S-adenosylmethioninamine (decarboxy-AdoMet) to putrescine (1,4-diaminobutane) to yield spermidine. The polypeptide is Polyamine aminopropyltransferase (Clostridium tetani (strain Massachusetts / E88)).